The sequence spans 833 residues: Leucine--tRNA ligase (833 aa).

The 'HIGH' region motif lies at 41 to 52 (PYPSGAGLHVGH). A 'KMSKS' region motif is present at residues 610 to 614 (KMSKS). An ATP-binding site is contributed by lysine 613.

It belongs to the class-I aminoacyl-tRNA synthetase family.

The protein resides in the cytoplasm. It carries out the reaction tRNA(Leu) + L-leucine + ATP = L-leucyl-tRNA(Leu) + AMP + diphosphate. The chain is Leucine--tRNA ligase from Streptococcus equi subsp. zooepidemicus (strain MGCS10565).